The chain runs to 154 residues: Ribosome maturation factor RimP (154 aa).

The protein belongs to the RimP family.

It is found in the cytoplasm. In terms of biological role, required for maturation of 30S ribosomal subunits. The chain is Ribosome maturation factor RimP from Clostridium perfringens (strain ATCC 13124 / DSM 756 / JCM 1290 / NCIMB 6125 / NCTC 8237 / Type A).